The sequence spans 89 residues: Small ribosomal subunit protein bS20 (89 aa).

The segment covering 1–11 (MANIKSQIKRN) has biased composition (polar residues). The tract at residues 1–22 (MANIKSQIKRNLTNEKRRLRNK) is disordered.

It belongs to the bacterial ribosomal protein bS20 family.

In terms of biological role, binds directly to 16S ribosomal RNA. The polypeptide is Small ribosomal subunit protein bS20 (Frankia casuarinae (strain DSM 45818 / CECT 9043 / HFP020203 / CcI3)).